The following is a 488-amino-acid chain: Cobyric acid synthase (488 aa).

The region spanning 248 to 435 is the GATase cobBQ-type domain; that stretch reads VLKVVVPVLP…LHGLFESPAA (188 aa). C329 acts as the Nucleophile in catalysis. The active site involves H427.

This sequence belongs to the CobB/CobQ family. CobQ subfamily.

It functions in the pathway cofactor biosynthesis; adenosylcobalamin biosynthesis. Functionally, catalyzes amidations at positions B, D, E, and G on adenosylcobyrinic A,C-diamide. NH(2) groups are provided by glutamine, and one molecule of ATP is hydrogenolyzed for each amidation. This chain is Cobyric acid synthase, found in Pseudomonas fluorescens (strain Pf0-1).